A 120-amino-acid polypeptide reads, in one-letter code: MSKMKITNARRTNRVRTALRRTANGRPRLSVFRSSKHIYAQVIDDAKGETLASASSLEKTMRDAGNTGANIDAAKAVGKLVAERAVEKGVKEVVFDRGGYLYHGRVKALADAARESGLSF.

Part of the 50S ribosomal subunit; part of the 5S rRNA/L5/L18/L25 subcomplex. Contacts the 5S and 23S rRNAs.

Its function is as follows. This is one of the proteins that bind and probably mediate the attachment of the 5S RNA into the large ribosomal subunit, where it forms part of the central protuberance. In Rhodopseudomonas palustris (strain ATCC BAA-98 / CGA009), this protein is Large ribosomal subunit protein uL18.